We begin with the raw amino-acid sequence, 922 residues long: Ubiquitin carboxyl-terminal hydrolase 29 (922 aa).

The segment at 160-196 (GILENQGGKGQNTLSSDVQTNEDILKEDNPVPNKKYK) is disordered. The span at 170–181 (QNTLSSDVQTNE) shows a compositional bias: polar residues. The USP domain occupies 285–885 (QGFPNLGNTC…SGYIFFYMHN (601 aa)). Catalysis depends on Cys294, which acts as the Nucleophile. His840 acts as the Proton acceptor in catalysis.

This sequence belongs to the peptidase C19 family.

It localises to the cytoplasm. The protein localises to the perinuclear region. The catalysed reaction is Thiol-dependent hydrolysis of ester, thioester, amide, peptide and isopeptide bonds formed by the C-terminal Gly of ubiquitin (a 76-residue protein attached to proteins as an intracellular targeting signal).. Deubiquitinase involved in innate antiviral immunity by mediating 'Lys-48'-linked deubiquitination of CGAS, thereby promoting its stabilization. The protein is Ubiquitin carboxyl-terminal hydrolase 29 of Homo sapiens (Human).